Reading from the N-terminus, the 231-residue chain is Protoporphyrinogen IX dehydrogenase [quinone] (231 aa).

Positions 8–178 (CLMLYSTTDG…AVRRFASDFA (171 aa)) constitute a Flavodoxin-like domain. FMN is bound by residues 14 to 18 (TTDGH) and 90 to 158 (FFSV…ETDS). The helical transmembrane segment at 208–228 (CLLAIVGMSAAVIVGIRIIAA) threads the bilayer.

It belongs to the HemG family. The cofactor is FMN.

It localises to the membrane. It carries out the reaction protoporphyrinogen IX + 3 a menaquinone = protoporphyrin IX + 3 a menaquinol. The enzyme catalyses protoporphyrinogen IX + 3 a ubiquinone = protoporphyrin IX + 3 a ubiquinol. It catalyses the reaction protoporphyrinogen IX + 3 a quinone = protoporphyrin IX + 3 a quinol. It participates in porphyrin-containing compound metabolism; protoporphyrin-IX biosynthesis; protoporphyrin-IX from protoporphyrinogen-IX: step 1/1. Functionally, in E.coli extracts under anerobic conditions catalyzes the 6-electron oxidation of protoporphyrinogen IX to form protoporphyrin IX, transferring electrons to fumarate reductase, presumably via menaquinone. In vitro under aerobic conditions forms protoporphyrin IX using ubiquinone as an electron acceptor. Complements an E.coli hemG deletion, allowing normal growth in vivo. This is Protoporphyrinogen IX dehydrogenase [quinone] from Leishmania major.